We begin with the raw amino-acid sequence, 268 residues long: uncharacterized protein (268 aa).

The segment at 45–64 (SDTQGPAPGINGQGKPSPGA) is disordered.

This is an uncharacterized protein from Aquifex aeolicus (strain VF5).